The primary structure comprises 163 residues: Urease accessory protein UreE (163 aa).

Residues 134 to 163 are disordered; the sequence is EAGAYGGGHRHHHDDDAPSIRQPARLRIHE.

It belongs to the UreE family.

Its subcellular location is the cytoplasm. Functionally, involved in urease metallocenter assembly. Binds nickel. Probably functions as a nickel donor during metallocenter assembly. The protein is Urease accessory protein UreE of Methylobacillus flagellatus (strain ATCC 51484 / DSM 6875 / VKM B-1610 / KT).